An 898-amino-acid polypeptide reads, in one-letter code: Serine/threonine-protein kinase TAO3 (898 aa).

Residues 24–277 (FVGLHEIGHG…SADLLRHDFV (254 aa)) enclose the Protein kinase domain. ATP is bound by residues 30-38 (IGHGSFGAV) and Lys-53. Asp-147 acts as the Proton acceptor in catalysis. Residues 316–374 (TRNGPLTESQEEEEDSEHGSNLSRKMDSLGSNHSIPSMSVSTGSQSSSVSSMQEVLDES) are disordered. The segment covering 334 to 351 (GSNLSRKMDSLGSNHSIP) has biased composition (polar residues). The span at 352–368 (SMSVSTGSQSSSVSSMQ) shows a compositional bias: low complexity. 3 coiled-coil regions span residues 452–502 (EQEN…THAN), 548–649 (FLES…HAML), and 754–875 (LKSL…IETF). Positions 565 to 596 (EEMNEDHSTPKKEKQERISKHKENLQHTQAEE) are disordered.

The protein belongs to the protein kinase superfamily. STE Ser/Thr protein kinase family. STE20 subfamily.

Its subcellular location is the cytoplasm. It localises to the cell membrane. The protein localises to the membrane raft. The protein resides in the lipid droplet. The enzyme catalyses L-seryl-[protein] + ATP = O-phospho-L-seryl-[protein] + ADP + H(+). It carries out the reaction L-threonyl-[protein] + ATP = O-phospho-L-threonyl-[protein] + ADP + H(+). Its function is as follows. Serine/threonine-protein kinase that acts as a regulator of the p38/MAPK14 stress-activated MAPK cascade and of the MAPK8/JNK cascade. In response to DNA damage, involved in the G2/M transition DNA damage checkpoint by activating the p38/MAPK14 stress-activated MAPK cascade, probably by mediating phosphorylation of upstream MAP kinase kinases. Inhibits basal activity of the MAPK8/JNK cascade. The polypeptide is Serine/threonine-protein kinase TAO3 (TAOK3) (Gallus gallus (Chicken)).